Reading from the N-terminus, the 533-residue chain is Retinoic acid receptor RXR-beta (533 aa).

The segment at 1–23 (MSWAARPPFLPQRHAAGQCGPVG) is disordered. Residues 1–204 (MSWAARPPFL…PGGPGAGKRL (204 aa)) are modulating. Position 25 is an omega-N-methylarginine (Arg-25). The tract at residues 36 to 181 (WRRRRPWLDP…GSGPPEDVKP (146 aa)) is disordered. Over residues 46-61 (AAAAAAAVAGGEQQTP) the composition is skewed to low complexity. Over residues 67 to 82 (EAGRDGMGDSGRDSRS) the composition is skewed to basic and acidic residues. Pro residues-rich tracts occupy residues 89–109 (NPLP…PPST) and 118–131 (APPP…PLGS). Over residues 132-143 (PFPVISSSMGSP) the composition is skewed to low complexity. The segment covering 144–153 (GLPPPAPPGF) has biased composition (pro residues). 2 consecutive NR C4-type zinc fingers follow at residues 205–225 (CAIC…CEGC) and 241–265 (CRDN…YQKC). The segment at residues 205-270 (CAICGDRSSG…RYQKCLATGM (66 aa)) is a DNA-binding region (nuclear receptor). Residues 271 to 295 (KREAVQEERQRGKDKDGDGEGAGGA) are hinge. Residues 276 to 288 (QEERQRGKDKDGD) show a composition bias toward basic and acidic residues. 2 disordered regions span residues 276-299 (QEER…PEEM) and 313-336 (QKSD…NDPV). The NR LBD domain maps to 296 to 529 (PEEMPVDRIL…TFLMEMLEAP (234 aa)). The span at 320–329 (EGPGGTGGSG) shows a compositional bias: gly residues.

Belongs to the nuclear hormone receptor family. NR2 subfamily. Homodimer (in vitro). Heterodimer with other retinoic acid receptor family members. Binds DNA preferentially as a RAR/RXR heterodimer. Interacts with NR1H3. Interacts with AKAP13. In terms of tissue distribution, expressed in aortic endothelial cells (at protein level). Expressed in monocytes. Expressed in a variety of tumor cell lines.

Its subcellular location is the nucleus. The protein localises to the cytoplasm. Functionally, receptor for retinoic acid. Retinoic acid receptors bind as heterodimers to their target response elements in response to their ligands, all-trans or 9-cis retinoic acid, and regulate gene expression in various biological processes. The RAR/RXR heterodimers bind to the retinoic acid response elements (RARE). The polypeptide is Retinoic acid receptor RXR-beta (RXRB) (Homo sapiens (Human)).